The primary structure comprises 247 residues: Putative cyclin-T1-1 (247 aa).

This sequence belongs to the cyclin family. Cyclin T subfamily.

This is Putative cyclin-T1-1 (CYCT1-1) from Arabidopsis thaliana (Mouse-ear cress).